Reading from the N-terminus, the 239-residue chain is Fatty acid metabolism regulator protein (239 aa).

Residues 6–74 (QSPAGFAEEY…HGKPTKVNNF (69 aa)) enclose the HTH gntR-type domain. Residues 34 to 53 (ERELSELIGVTRTTLREVLQ) constitute a DNA-binding region (H-T-H motif).

As to quaternary structure, homodimer.

It localises to the cytoplasm. Its function is as follows. Multifunctional regulator of fatty acid metabolism. In Yersinia enterocolitica serotype O:8 / biotype 1B (strain NCTC 13174 / 8081), this protein is Fatty acid metabolism regulator protein.